A 358-amino-acid polypeptide reads, in one-letter code: Mannonate dehydratase (358 aa).

The protein belongs to the mannonate dehydratase family. Requires Fe(2+) as cofactor. Mn(2+) is required as a cofactor.

The enzyme catalyses D-mannonate = 2-dehydro-3-deoxy-D-gluconate + H2O. It functions in the pathway carbohydrate metabolism; pentose and glucuronate interconversion. Its function is as follows. Catalyzes the dehydration of D-mannonate. This chain is Mannonate dehydratase, found in Lactococcus lactis subsp. cremoris (strain MG1363).